Reading from the N-terminus, the 92-residue chain is Small ribosomal subunit protein uS19 (92 aa).

This sequence belongs to the universal ribosomal protein uS19 family.

Its function is as follows. Protein S19 forms a complex with S13 that binds strongly to the 16S ribosomal RNA. The chain is Small ribosomal subunit protein uS19 from Sulfurovum sp. (strain NBC37-1).